The chain runs to 174 residues: Transcription factor bHLH168 (174 aa).

Positions 14–63 (SLREQRNLREKERRMRMKHLFSILSSHVSPTRRLPVPQLIDQAVSYMIQL) constitute a bHLH domain.

It belongs to the bHLH protein family.

It localises to the nucleus. This Arabidopsis thaliana (Mouse-ear cress) protein is Transcription factor bHLH168.